The sequence spans 1026 residues: Chromodomain-helicase-DNA-binding protein 1-like (1026 aa).

One can recognise a Helicase ATP-binding domain in the interval 47–212 (SLCMKNQQGC…YSLLTFIQPS (166 aa)). Position 60–67 (60–67 (DEMGLGKT)) interacts with ATP. A DEAH box motif is present at residues 163–166 (DEAH). The 155-residue stretch at 340–494 (LLDSMLAYLQ…EGRFSLLDQA (155 aa)) folds into the Helicase C-terminal domain. Residues 540–668 (LTDEEHAKLN…EELNYKKKMA (129 aa)) adopt a coiled-coil conformation. The tract at residues 594–628 (AEMEDAEKEGRALRNKAGVSLSGPLINPARKKRPL) is regulatory linker segment (RLS). The tract at residues 606–655 (LRNKAGVSLSGPLINPARKKRPLTEAELEERRQKRQAAAAKRAKLQEERK) is disordered. The tract at residues 608–666 (NKAGVSLSGPLINPARKKRPLTEAELEERRQKRQAAAAKRAKLQEERKKQQEELNYKKK) is required for ATPase activity. In terms of domain architecture, Macro spans 697-870 (HVSFSSTDSD…IFTSIYYYRR (174 aa)). Residues 877–907 (VSSTASTTTPSSSKPAASSPSESPHSSSPPA) are compositionally biased toward low complexity. A disordered region spans residues 877 to 929 (VSSTASTTTPSSSKPAASSPSESPHSSSPPANREGLTKSAELSTTSHEGPGAP). In terms of domain architecture, BRCT spans 930-1023 (GLADFMRGVH…RKVSVSKYVI (94 aa)).

It belongs to the SNF2/RAD54 helicase family. In terms of assembly, interacts with nucleosomes; interacts with the acidic patch of histones.

Its subcellular location is the nucleus. The protein resides in the chromosome. The catalysed reaction is ATP + H2O = ADP + phosphate + H(+). Its activity is regulated as follows. Adopts an inactive conformation in absence of DNA damage. Binding to poly-ADP-ribosylated histones activates the ATP-dependent chromatin remodeler activity. Its function is as follows. ATP-dependent chromatin remodeler that mediates chromatin-remodeling following DNA damage. Recruited to DNA damage sites through interaction with poly-ADP-ribose: specifically recognizes and binds histones that are poly-ADP-ribosylated on serine residues in response to DNA damage. Poly-ADP-ribose-binding activates the ATP-dependent chromatin remodeler activity, thereby regulating chromatin during DNA repair. Catalyzes nucleosome sliding away from DNA breaks in an ATP-dependent manner. In Danio rerio (Zebrafish), this protein is Chromodomain-helicase-DNA-binding protein 1-like (chd1l).